The chain runs to 301 residues: Glutamine amidotransferase-like protein GlxB (301 aa).

Residue Cys-2 is part of the active site. The region spanning Cys-2–Gln-298 is the Glutamine amidotransferase type-2 domain.

This chain is Glutamine amidotransferase-like protein GlxB (glxB), found in Rhizobium meliloti (strain 1021) (Ensifer meliloti).